We begin with the raw amino-acid sequence, 70 residues long: MNNQQKIKCPICGKQNTWSPDNQFRPFCSERCKLIDLGEWASESRKIPGSSIDPESIVTSNNKQDNEDEQ.

Zn(2+)-binding residues include Cys-9, Cys-12, Cys-28, and Cys-32. The interval Glu-43–Gln-70 is disordered.

This sequence belongs to the DNA gyrase inhibitor YacG family. In terms of assembly, interacts with GyrB. Requires Zn(2+) as cofactor.

Functionally, inhibits all the catalytic activities of DNA gyrase by preventing its interaction with DNA. Acts by binding directly to the C-terminal domain of GyrB, which probably disrupts DNA binding by the gyrase. This chain is DNA gyrase inhibitor YacG, found in Legionella pneumophila (strain Paris).